Here is a 158-residue protein sequence, read N- to C-terminus: Deoxyuridine 5'-triphosphate nucleotidohydrolase (158 aa).

Residues 75–77 (RSG), Asn88, 92–94 (TVD), and Lys102 contribute to the substrate site.

It belongs to the dUTPase family. Requires Mg(2+) as cofactor.

It carries out the reaction dUTP + H2O = dUMP + diphosphate + H(+). Its pathway is pyrimidine metabolism; dUMP biosynthesis; dUMP from dCTP (dUTP route): step 2/2. Functionally, this enzyme is involved in nucleotide metabolism: it produces dUMP, the immediate precursor of thymidine nucleotides and it decreases the intracellular concentration of dUTP so that uracil cannot be incorporated into DNA. The protein is Deoxyuridine 5'-triphosphate nucleotidohydrolase of Bifidobacterium longum (strain DJO10A).